Reading from the N-terminus, the 146-residue chain is Cyanate hydratase (146 aa).

Catalysis depends on residues R87, E90, and S113.

The protein belongs to the cyanase family.

The enzyme catalyses cyanate + hydrogencarbonate + 3 H(+) = NH4(+) + 2 CO2. Functionally, catalyzes the reaction of cyanate with bicarbonate to produce ammonia and carbon dioxide. This Trichormus variabilis (strain ATCC 29413 / PCC 7937) (Anabaena variabilis) protein is Cyanate hydratase.